The chain runs to 377 residues: Chaperone protein DnaJ (377 aa).

In terms of domain architecture, J spans 4–69; the sequence is DYYEALGVTR…QKRAAYDRFG (66 aa). A CR-type zinc finger spans residues 135–213; it reads GKTAQIRVPT…CHGQGRVTQE (79 aa). Residues Cys148, Cys151, Cys165, Cys168, Cys187, Cys190, Cys201, and Cys204 each contribute to the Zn(2+) site. CXXCXGXG motif repeat units follow at residues 148–155, 165–172, 187–194, and 201–208; these read CDECSGSG, CTMCSGSG, CPGCNGRG, and CEKCHGQG.

Belongs to the DnaJ family. As to quaternary structure, homodimer. The cofactor is Zn(2+).

The protein localises to the cytoplasm. Participates actively in the response to hyperosmotic and heat shock by preventing the aggregation of stress-denatured proteins and by disaggregating proteins, also in an autonomous, DnaK-independent fashion. Unfolded proteins bind initially to DnaJ; upon interaction with the DnaJ-bound protein, DnaK hydrolyzes its bound ATP, resulting in the formation of a stable complex. GrpE releases ADP from DnaK; ATP binding to DnaK triggers the release of the substrate protein, thus completing the reaction cycle. Several rounds of ATP-dependent interactions between DnaJ, DnaK and GrpE are required for fully efficient folding. Also involved, together with DnaK and GrpE, in the DNA replication of plasmids through activation of initiation proteins. This chain is Chaperone protein DnaJ, found in Brucella ovis (strain ATCC 25840 / 63/290 / NCTC 10512).